Here is a 51-residue protein sequence, read N- to C-terminus: Defensin (51 aa).

Intrachain disulfides connect C3–C31, C17–C36, and C21–C38. F51 bears the Phenylalanine amide mark.

The protein localises to the secreted. In terms of biological role, antibacterial peptide against Gram-positive and Gram-negative bacteria and fungi. The protein is Defensin of Bombus pascuorum (Common carder bumblebee).